The following is a 567-amino-acid chain: DNA ligase B (567 aa).

Residue K132 is the N6-AMP-lysine intermediate of the active site.

Belongs to the NAD-dependent DNA ligase family. LigB subfamily.

It carries out the reaction NAD(+) + (deoxyribonucleotide)n-3'-hydroxyl + 5'-phospho-(deoxyribonucleotide)m = (deoxyribonucleotide)n+m + AMP + beta-nicotinamide D-nucleotide.. Catalyzes the formation of phosphodiester linkages between 5'-phosphoryl and 3'-hydroxyl groups in double-stranded DNA using NAD as a coenzyme and as the energy source for the reaction. This chain is DNA ligase B, found in Yersinia pestis bv. Antiqua (strain Angola).